The sequence spans 778 residues: GRIP and coiled-coil domain-containing protein 1 (778 aa).

Positions 13 to 61 form a coiled coil; it reads SKKDLLETIETQKKQLLQYQARLKDVVRAYKSLLKEKEALEASIKVLSV. 3 disordered regions span residues 70–157, 186–208, and 617–638; these read SGVQ…MDKR, YLAD…EEER, and GRRS…DTAS. Residues 83-93 show a composition bias toward basic and acidic residues; that stretch reads VDDRCSTHSED. Low complexity-rich tracts occupy residues 94–109 and 133–152; these read STGT…SLTS and ASGS…SAGS. A coiled-coil region spans residues 152 to 702; sequence SEMDKRVHQL…EEGERHREEV (551 aa). Positions 716–766 constitute a GRIP domain; the sequence is QSREGANLEYLKNIIYRFLTLPDSLGRQQTLTAILTILHFSPEEKQVLMRL.

Its subcellular location is the cytoplasm. The protein localises to the golgi apparatus membrane. Probably involved in maintaining Golgi structure. This is GRIP and coiled-coil domain-containing protein 1 (Gcc1) from Mus musculus (Mouse).